The following is a 209-amino-acid chain: Neurotrophin-4 (209 aa).

Residues 1 to 21 form the signal peptide; sequence MLPRHSCSLLLFLLLLPSVPM. Positions 22 to 79 are excised as a propeptide; sequence EPQPPSSTLPPFLAPEWDLLSPRVALSRGTPAGPPLLFLLEAGAYGEPAGAPANRSRR. N-linked (GlcNAc...) asparagine glycosylation is present at Asn75. 3 cysteine pairs are disulfide-bonded: Cys96-Cys169, Cys140-Cys198, and Cys157-Cys200.

The protein belongs to the NGF-beta family. Expressed in thymus, muscle, ovary, brain, heart, stomach and kidney. Expressed in both embryo and adult tissues.

It localises to the secreted. Target-derived survival factor for peripheral sensory sympathetic neurons. May promote ameloblast differentiation and subsequent reduction in proliferation of ameloblasts. This is Neurotrophin-4 (Ntf4) from Rattus norvegicus (Rat).